The chain runs to 245 residues: Fumarate reductase iron-sulfur subunit (245 aa).

The 82-residue stretch at 17 to 98 (PQSAVNKPHF…NGVITLMPMP (82 aa)) folds into the 2Fe-2S ferredoxin-type domain. Residues Cys-60, Cys-65, Cys-68, and Cys-80 each contribute to the [2Fe-2S] cluster site. The 4Fe-4S ferredoxin-type domain occupies 145-174 (AQEVFELDRCIECGCCIASCGTKLMRPNFI). [4Fe-4S] cluster is bound by residues Cys-154, Cys-157, and Cys-160. [3Fe-4S] cluster-binding residues include Cys-164, Cys-211, and Cys-217. Cys-221 contacts [4Fe-4S] cluster.

It belongs to the succinate dehydrogenase/fumarate reductase iron-sulfur protein family. Part of an enzyme complex containing three subunits: a flavoprotein (frdA), an iron-sulfur protein (frdB), and diheme cytochrome b (frdC). [2Fe-2S] cluster serves as cofactor. It depends on [3Fe-4S] cluster as a cofactor. The cofactor is [4Fe-4S] cluster.

The enzyme catalyses a menaquinone + succinate = a menaquinol + fumarate. The chain is Fumarate reductase iron-sulfur subunit (frdB) from Helicobacter pylori (strain J99 / ATCC 700824) (Campylobacter pylori J99).